A 105-amino-acid chain; its full sequence is uncharacterized protein (105 aa).

3 helical membrane-spanning segments follow: residues 3 to 23 (ISPL…QALF), 41 to 61 (DLVN…ALVS), and 63 to 83 (AFPV…TFIY).

The protein resides in the cell membrane. This is an uncharacterized protein from Methanocaldococcus jannaschii (strain ATCC 43067 / DSM 2661 / JAL-1 / JCM 10045 / NBRC 100440) (Methanococcus jannaschii).